The sequence spans 420 residues: Glycerol-3-phosphate dehydrogenase [NAD(+)] (420 aa).

Residues 16–21 (GSGNWG), F48, and F119 contribute to the NAD(+) site. K142 is a substrate binding site. Residue A175 coordinates NAD(+). The interval 190–217 (YDPPPMDNSRAPTPRSNSPANGNGIAPL) is disordered. Residues 199–210 (RAPTPRSNSPAN) show a composition bias toward polar residues. K278 serves as the catalytic Proton acceptor. Residues R344 and Q373 each coordinate NAD(+). 344–345 (RN) provides a ligand contact to substrate.

Belongs to the NAD-dependent glycerol-3-phosphate dehydrogenase family.

It carries out the reaction sn-glycerol 3-phosphate + NAD(+) = dihydroxyacetone phosphate + NADH + H(+). The chain is Glycerol-3-phosphate dehydrogenase [NAD(+)] from Colletotrichum gloeosporioides (Anthracnose fungus).